Reading from the N-terminus, the 910-residue chain is Potassium/sodium hyperpolarization-activated cyclic nucleotide-gated channel 1 (910 aa).

Positions Met-1–Gly-75 are disordered. Residues Met-1–Arg-131 are Cytoplasmic-facing. The chain crosses the membrane as a helical span at residues Phe-132–Ile-153. Topologically, residues Thr-154–Thr-162 are extracellular. A helical transmembrane segment spans residues Pro-163–Phe-183. The Cytoplasmic segment spans residues Arg-184–Met-204. Residues Asn-205 to Phe-225 form a helical membrane-spanning segment. The Extracellular portion of the chain corresponds to Leu-226–Thr-249. A helical; Voltage-sensor transmembrane segment spans residues Lys-250 to Trp-270. Residues Glu-271–Val-284 lie on the Cytoplasmic side of the membrane. Residues Val-285–Leu-307 form a helical membrane-spanning segment. Over Val-308 to Gln-333 the chain is Extracellular. N-linked (GlcNAc...) asparagine glycosylation occurs at Asn-327. An intramembrane region (pore-forming) is located at residues Tyr-334–Pro-355. The Selectivity filter signature appears at Cys-347 to Gly-351. Over Val-356 to Asp-360 the chain is Extracellular. The helical transmembrane segment at Leu-361 to His-381 threads the bilayer. Topologically, residues Ala-382–Leu-910 are cytoplasmic. 3',5'-cyclic AMP contacts are provided by Gly-528, Glu-529, Cys-531, Arg-538, Thr-539, Arg-579, and Arg-582. Disordered regions lie at residues Thr-634–Ala-681, Gln-771–Ser-791, and Gln-865–Leu-910. Positions Thr-639 to Ser-680 are enriched in low complexity. Residues Gly-780 to Ser-791 are compositionally biased toward polar residues. Positions Arg-875–Ala-885 are enriched in pro residues. Positions Asp-900–Leu-910 are enriched in basic and acidic residues.

Belongs to the potassium channel HCN family. In terms of assembly, homotetramer. Heterotetramer with HCN2. The potassium channel is composed of a homo- or heterotetrameric complex of pore-forming subunits. Interacts with KCNE2. Interacts with the SH3 domain of CSK. In terms of processing, N-glycosylated. Predominantly expressed in brain. Highly expressed in apical dendrites of pyramidal neurons in the cortex, in the layer corresponding to the stratum lacunosum-moleculare in the hippocampus and in axons of basket cells in the cerebellum (at protein level). Expressed in a subset of elongated cells in taste buds.

It localises to the cell membrane. It catalyses the reaction Na(+)(in) = Na(+)(out). The catalysed reaction is K(+)(in) = K(+)(out). With respect to regulation, activated by cAMP. cAMP binding causes a conformation change that leads to the assembly of an active tetramer and channel opening. Compared to other family members, cAMP has less stimulatory effect on HCN1 because part of the molecules already contain bound cAMP and form homotetramers when cAMP levels are low, this inherent tetramerization in HCN1 results in a weaker response to increased cAMP. Its function is as follows. Hyperpolarization-activated ion channel that are permeable to sodium and potassium ions. Exhibits weak selectivity for potassium over sodium ions. Contributes to the native pacemaker currents in heart (If) and in neurons (Ih). Participates in cerebellar mechanisms of motor learning. May mediate responses to sour stimuli. This Mus musculus (Mouse) protein is Potassium/sodium hyperpolarization-activated cyclic nucleotide-gated channel 1 (Hcn1).